A 1011-amino-acid chain; its full sequence is Antigenic heat-stable 120 kDa protein (1011 aa).

Disordered regions lie at residues 1–37 (DTSE…TPAL), 54–73 (TPSM…TSDP), and 348–396 (GQSK…PQSQ). Positions 12–27 (EYTEEQKQTEEQEQKE) are enriched in basic and acidic residues. Polar residues-rich tracts occupy residues 348–373 (GQSK…QYKQ) and 380–396 (PTNQ…PQSQ).

It localises to the cytoplasm. This Rickettsia sibirica subsp. mongolitimonae (Rickettsia mongolotimonae) protein is Antigenic heat-stable 120 kDa protein (sca4).